The sequence spans 313 residues: Ribose-phosphate pyrophosphokinase (313 aa).

ATP-binding positions include 40–42 (DGE) and 98–99 (RQ). 2 residues coordinate Mg(2+): His-132 and Asp-172. The active site involves Lys-195. Residues Arg-197, Asp-221, and 225-229 (DTAGT) each bind D-ribose 5-phosphate.

Belongs to the ribose-phosphate pyrophosphokinase family. Class I subfamily. As to quaternary structure, homohexamer. It depends on Mg(2+) as a cofactor.

It is found in the cytoplasm. It catalyses the reaction D-ribose 5-phosphate + ATP = 5-phospho-alpha-D-ribose 1-diphosphate + AMP + H(+). The protein operates within metabolic intermediate biosynthesis; 5-phospho-alpha-D-ribose 1-diphosphate biosynthesis; 5-phospho-alpha-D-ribose 1-diphosphate from D-ribose 5-phosphate (route I): step 1/1. In terms of biological role, involved in the biosynthesis of the central metabolite phospho-alpha-D-ribosyl-1-pyrophosphate (PRPP) via the transfer of pyrophosphoryl group from ATP to 1-hydroxyl of ribose-5-phosphate (Rib-5-P). The sequence is that of Ribose-phosphate pyrophosphokinase from Porphyromonas gingivalis (strain ATCC BAA-308 / W83).